Consider the following 1699-residue polypeptide: Hybrid signal transduction histidine kinase E (1699 aa).

2 disordered regions span residues 1-32 (MDKL…NLEN) and 58-97 (NNII…NPNV). The span at 7–32 (NNNLSPPSSPSSSTTTPNLSSTNLEN) shows a compositional bias: low complexity. The next 6 membrane-spanning stretches (helical) occupy residues 142 to 162 (CILL…LIFL), 164 to 184 (SFYP…IVST), 191 to 211 (LVAL…FLQI), 238 to 258 (LNFL…IFFP), 262 to 282 (FSIT…LISI), and 295 to 315 (NLIV…ILSI). The segment covering 412–432 (ITNGGNNKQTSTTSANSTPRY) has biased composition (polar residues). Disordered stretches follow at residues 412–439 (ITNG…NNNN) and 542–593 (LLNN…NISN). The span at 544–593 (NNNNNNNNNNNNNNNNNNNNNNNNNNSNNNNNNNSNNNNNNNNINNNISN) shows a compositional bias: low complexity. In terms of domain architecture, Histidine kinase spans 678 to 950 (TVSHEVRTPI…AFSFTSILST (273 aa)). At H681 the chain carries Phosphohistidine; by autocatalysis. Disordered stretches follow at residues 819–866 (NNNN…NNNN), 1018–1054 (NNNN…NDNN), 1186–1239 (KKQQ…RKSS), 1252–1294 (MVQV…NPNN), and 1351–1406 (SIPI…SPPP). The span at 1198–1212 (MGDTLSSTKSPQYTN) shows a compositional bias: polar residues. The segment covering 1219–1239 (SSSSNGSLNKSNRSNLLRKSS) has biased composition (low complexity). The span at 1271–1282 (KGNNSNPNSTEL) shows a compositional bias: polar residues. Low complexity-rich tracts occupy residues 1283–1294 (NSTNSVNGNPNN) and 1355–1392 (NINN…NNNN). Residues 1575–1695 (NALIVDDTEL…TLKDTLLKWG (121 aa)) form the Response regulatory domain. 4-aspartylphosphate is present on D1625.

The protein localises to the membrane. The catalysed reaction is ATP + protein L-histidine = ADP + protein N-phospho-L-histidine.. May act in a signal transduction pathway. This protein undergoes an ATP-dependent autophosphorylation at a conserved histidine residue in the kinase core, and a phosphoryl group is then transferred to a conserved aspartate residue in the receiver domain. This is Hybrid signal transduction histidine kinase E (dhkE) from Dictyostelium discoideum (Social amoeba).